Consider the following 811-residue polypeptide: Protein MEI2-like 5 (811 aa).

RRM domains lie at arginine 193–proline 266 and glycine 278–proline 351. Positions threonine 371–threonine 397 are disordered. Positions asparagine 374–threonine 397 are enriched in polar residues.

Functionally, probable RNA-binding protein that may play a role in growth regulation. The polypeptide is Protein MEI2-like 5 (ML5) (Oryza sativa subsp. japonica (Rice)).